A 175-amino-acid chain; its full sequence is Alpha-crystallin B chain (175 aa).

Residue Met1 is modified to N-acetylmethionine. Phosphoserine occurs at positions 19, 45, and 59. Positions 56–164 (RAPSWIDTGL…PERTIPITRE (109 aa)) constitute a sHSP domain. His83 serves as a coordination point for Zn(2+). Lys92 carries the post-translational modification N6-acetyllysine. His104, Glu106, His111, and His119 together coordinate Zn(2+). Residues 145–175 (VNGPRKQVSGPERTIPITREEKPAVAAAPKK) form a disordered region. N6-acetyllysine is present on Lys166.

This sequence belongs to the small heat shock protein (HSP20) family. In terms of assembly, heteromer composed of three CRYAA and one CRYAB subunits. Aggregates with homologous proteins, including the small heat shock protein HSPB1, to form large heteromeric complexes. Inter-subunit bridging via zinc ions enhances stability, which is crucial as there is no protein turn over in the lens. Interacts with HSPBAP1. Interacts with TTN/titin. Interacts with TMEM109; in the cellular response to DNA damage. Interacts with DES; binds rapidly during early stages of DES filament assembly and a reduced binding seen in the later stages. Interacts with TMED10; the interaction mediates the translocation from the cytoplasm into the ERGIC (endoplasmic reticulum-Golgi intermediate compartment) and thereby secretion. Interacts with ATP6V1A and with MTOR, forming a ternary complex. Abundantly expressed in the lens of the eye. Expressed in ventricular cardiomyocytes of the heart. Also expressed in skeletal muscle and the kidney.

It is found in the cytoplasm. The protein localises to the cytosol. Its subcellular location is the nucleus. It localises to the secreted. The protein resides in the lysosome. May contribute to the transparency and refractive index of the lens. Has chaperone-like activity, preventing aggregation of various proteins under a wide range of stress conditions. In lens epithelial cells, stabilizes the ATP6V1A protein, preventing its degradation by the proteasome. The sequence is that of Alpha-crystallin B chain from Mus musculus (Mouse).